We begin with the raw amino-acid sequence, 128 residues long: 3-aminoacrylate deaminase RutC (128 aa).

This sequence belongs to the RutC family.

The enzyme catalyses (Z)-3-aminoacrylate + H2O + H(+) = 3-oxopropanoate + NH4(+). Involved in pyrimidine catabolism. Catalyzes the deamination of 3-aminoacrylate to malonic semialdehyde, a reaction that can also occur spontaneously. RutC may facilitate the reaction and modulate the metabolic fitness, rather than catalyzing essential functions. The sequence is that of 3-aminoacrylate deaminase RutC from Enterobacter cloacae subsp. cloacae (strain ATCC 13047 / DSM 30054 / NBRC 13535 / NCTC 10005 / WDCM 00083 / NCDC 279-56).